The chain runs to 288 residues: Energy-coupling factor transporter ATP-binding protein EcfA3 (288 aa).

The ABC transporter domain occupies Ile3 to Arg245. Gly40 to Ser47 lines the ATP pocket.

The protein belongs to the ABC transporter superfamily. Energy-coupling factor EcfA family. As to quaternary structure, forms a stable energy-coupling factor (ECF) transporter complex composed of 2 membrane-embedded substrate-binding proteins (S component), 2 ATP-binding proteins (A component) and 2 transmembrane proteins (T component).

The protein resides in the cell membrane. Its function is as follows. ATP-binding (A) component of a common energy-coupling factor (ECF) ABC-transporter complex. Unlike classic ABC transporters this ECF transporter provides the energy necessary to transport a number of different substrates. In Oenococcus oeni (strain ATCC BAA-331 / PSU-1), this protein is Energy-coupling factor transporter ATP-binding protein EcfA3.